We begin with the raw amino-acid sequence, 425 residues long: Enolase (425 aa).

A (2R)-2-phosphoglycerate-binding site is contributed by Q161. The active-site Proton donor is E203. Mg(2+) contacts are provided by D240, E283, and D310. Residues K335, R364, S365, and K386 each coordinate (2R)-2-phosphoglycerate. K335 (proton acceptor) is an active-site residue.

The protein belongs to the enolase family. In terms of assembly, component of the RNA degradosome, a multiprotein complex involved in RNA processing and mRNA degradation. It depends on Mg(2+) as a cofactor.

It is found in the cytoplasm. Its subcellular location is the secreted. The protein localises to the cell surface. It carries out the reaction (2R)-2-phosphoglycerate = phosphoenolpyruvate + H2O. Its pathway is carbohydrate degradation; glycolysis; pyruvate from D-glyceraldehyde 3-phosphate: step 4/5. Functionally, catalyzes the reversible conversion of 2-phosphoglycerate (2-PG) into phosphoenolpyruvate (PEP). It is essential for the degradation of carbohydrates via glycolysis. The chain is Enolase from Ruthia magnifica subsp. Calyptogena magnifica.